A 139-amino-acid chain; its full sequence is ATP synthase epsilon chain (139 aa).

The protein belongs to the ATPase epsilon chain family. In terms of assembly, F-type ATPases have 2 components, CF(1) - the catalytic core - and CF(0) - the membrane proton channel. CF(1) has five subunits: alpha(3), beta(3), gamma(1), delta(1), epsilon(1). CF(0) has three main subunits: a, b and c.

It is found in the cell inner membrane. In terms of biological role, produces ATP from ADP in the presence of a proton gradient across the membrane. In Enterobacter sp. (strain 638), this protein is ATP synthase epsilon chain.